Consider the following 83-residue polypeptide: Small ribosomal subunit protein bS16 (83 aa).

It belongs to the bacterial ribosomal protein bS16 family.

The chain is Small ribosomal subunit protein bS16 from Borrelia hermsii (strain HS1 / DAH).